The chain runs to 130 residues: Protein ApaG (130 aa).

The ApaG domain occupies 3 to 127 (SEVTRSIRVT…FSLDSPHGRS (125 aa)).

This chain is Protein ApaG, found in Rhodospirillum centenum (strain ATCC 51521 / SW).